Consider the following 472-residue polypeptide: Chromosomal replication initiator protein DnaA (472 aa).

The interval 1 to 73 is domain I, interacts with DnaA modulators; that stretch reads MSNMEHDRWS…LTCWQAELPE (73 aa). The domain II stretch occupies residues 73–128; the sequence is EVCRIDLTVRSPMRAAVAKEAAAPVEHRRAEHRPATETRSHATVPASSNHDALGGS. The segment at 92-127 is disordered; that stretch reads EAAAPVEHRRAEHRPATETRSHATVPASSNHDALGG. The segment covering 97 to 112 has biased composition (basic and acidic residues); the sequence is VEHRRAEHRPATETRS. Residues 129–351 form a domain III, AAA+ region region; sequence PLDPRLTFAS…GAINRLLAHS (223 aa). ATP-binding residues include Gly-176, Gly-178, Lys-179, and Thr-180. The interval 352–472 is domain IV, binds dsDNA; sequence KLNAQPVTLE…VDSLKRQLQE (121 aa).

It belongs to the DnaA family. Oligomerizes as a right-handed, spiral filament on DNA at oriC.

It is found in the cytoplasm. Plays an essential role in the initiation and regulation of chromosomal replication. ATP-DnaA binds to the origin of replication (oriC) to initiate formation of the DNA replication initiation complex once per cell cycle. Binds the DnaA box (a 9 base pair repeat at the origin) and separates the double-stranded (ds)DNA. Forms a right-handed helical filament on oriC DNA; dsDNA binds to the exterior of the filament while single-stranded (ss)DNA is stabiized in the filament's interior. The ATP-DnaA-oriC complex binds and stabilizes one strand of the AT-rich DNA unwinding element (DUE), permitting loading of DNA polymerase. After initiation quickly degrades to an ADP-DnaA complex that is not apt for DNA replication. Binds acidic phospholipids. This chain is Chromosomal replication initiator protein DnaA, found in Rhodopseudomonas palustris (strain HaA2).